We begin with the raw amino-acid sequence, 37 residues long: Palicourein (37 aa).

The segment at residues 1-37 (GDPTFCGETCRVIPVCTYSAALGCTCDDRSDGLCKRN) is a cross-link (cyclopeptide (Gly-Asn)). Intrachain disulfides connect cysteine 6–cysteine 24, cysteine 10–cysteine 26, and cysteine 16–cysteine 34.

It belongs to the cyclotide family. This is a cyclic peptide.

Functionally, probably participates in a plant defense mechanism. Inhibits the cytopathic effects of the human immunodeficiency virus. This Palicourea condensata (Cappel) protein is Palicourein.